The following is a 568-amino-acid chain: MASPALISETEAWKDLKAHLEGIKMTHLRELMGDTERCQSMMLEFDNIFLDYSRQQASPDTISKLYRLADAAHLKQKIDHMYNGDHINSTENRSVLHVALRAPRNLAICSDGKNVVPDVWNVLDKIKDFSDRVRNGSWIGATGKELKDVIAVGIGGSFLGPLFVHTALQTDPEASKNARGRELRFLANVDPIDVARNISGLSPETTLVVVVSKTFTTAETMLNARTLREWISSALGPSAVAKHMVAVSTNIPLVEKFGIDPNNAFAFWDWVGGRYSVCSAVGVLPLSLQYGFAVVEKFLQGAHSIDQHFSSAPFEKNIPVLLGLLSVWNVSFLGYPARAILPYSQALEKLAPHIQQVSMESNGKGVSIDGLPLPFESGEIDFGEPGTNGQHSFYQLIHQGRVIPCDFIGVVKSQQPVYLKGEVVNNHDELMSNFFAQPDALAYGKTPEQLKKENVSEHLIPHKTFTGNRPSISLLLPTLDAYRIGQLLAIYEHRVAVQGFVWGINSFDQWGVELGKSLATQVRKQLHGSRVKGEPVEGFNFSTKTLLTRYLEATSDVPADPSTLLPNI.

Glutamate 360 acts as the Proton donor in catalysis. Catalysis depends on residues histidine 391 and lysine 516.

It belongs to the GPI family. As to quaternary structure, homodimer.

The protein resides in the cytoplasm. The catalysed reaction is alpha-D-glucose 6-phosphate = beta-D-fructose 6-phosphate. Its pathway is carbohydrate degradation; glycolysis; D-glyceraldehyde 3-phosphate and glycerone phosphate from D-glucose: step 2/4. The sequence is that of Glucose-6-phosphate isomerase, cytosolic 1 (PGIC1) from Clarkia williamsonii.